The following is a 311-amino-acid chain: Probable deoxyhypusine synthase (311 aa).

Catalysis depends on Lys-284, which acts as the Nucleophile.

This sequence belongs to the deoxyhypusine synthase family. NAD(+) serves as cofactor.

It carries out the reaction [eIF5A protein]-L-lysine + spermidine = [eIF5A protein]-deoxyhypusine + propane-1,3-diamine. The protein operates within protein modification; eIF5A hypusination. Functionally, catalyzes the NAD-dependent oxidative cleavage of spermidine and the subsequent transfer of the butylamine moiety of spermidine to the epsilon-amino group of a specific lysine residue of the eIF-5A precursor protein to form the intermediate deoxyhypusine residue. In Sulfurisphaera tokodaii (strain DSM 16993 / JCM 10545 / NBRC 100140 / 7) (Sulfolobus tokodaii), this protein is Probable deoxyhypusine synthase (dys).